Reading from the N-terminus, the 130-residue chain is Small ribosomal subunit protein uS11 (130 aa).

Belongs to the universal ribosomal protein uS11 family. Part of the 30S ribosomal subunit. Interacts with proteins S7 and S18. Binds to IF-3.

In terms of biological role, located on the platform of the 30S subunit, it bridges several disparate RNA helices of the 16S rRNA. Forms part of the Shine-Dalgarno cleft in the 70S ribosome. The chain is Small ribosomal subunit protein uS11 from Gloeobacter violaceus (strain ATCC 29082 / PCC 7421).